The chain runs to 364 residues: Aminomethyltransferase (364 aa).

This sequence belongs to the GcvT family. As to quaternary structure, the glycine cleavage system is composed of four proteins: P, T, L and H.

It carries out the reaction N(6)-[(R)-S(8)-aminomethyldihydrolipoyl]-L-lysyl-[protein] + (6S)-5,6,7,8-tetrahydrofolate = N(6)-[(R)-dihydrolipoyl]-L-lysyl-[protein] + (6R)-5,10-methylene-5,6,7,8-tetrahydrofolate + NH4(+). In terms of biological role, the glycine cleavage system catalyzes the degradation of glycine. The chain is Aminomethyltransferase from Shewanella sp. (strain ANA-3).